The sequence spans 432 residues: 3-phosphoshikimate 1-carboxyvinyltransferase (432 aa).

3-phosphoshikimate-binding residues include K21, S22, and R26. Position 21 (K21) interacts with phosphoenolpyruvate. Phosphoenolpyruvate contacts are provided by G93 and R121. Residues S166, Q168, D318, and K345 each contribute to the 3-phosphoshikimate site. Q168 serves as a coordination point for phosphoenolpyruvate. The active-site Proton acceptor is the D318. Phosphoenolpyruvate contacts are provided by R349 and R391.

The protein belongs to the EPSP synthase family. As to quaternary structure, monomer.

The protein resides in the cytoplasm. The enzyme catalyses 3-phosphoshikimate + phosphoenolpyruvate = 5-O-(1-carboxyvinyl)-3-phosphoshikimate + phosphate. Its pathway is metabolic intermediate biosynthesis; chorismate biosynthesis; chorismate from D-erythrose 4-phosphate and phosphoenolpyruvate: step 6/7. In terms of biological role, catalyzes the transfer of the enolpyruvyl moiety of phosphoenolpyruvate (PEP) to the 5-hydroxyl of shikimate-3-phosphate (S3P) to produce enolpyruvyl shikimate-3-phosphate and inorganic phosphate. In Persephonella marina (strain DSM 14350 / EX-H1), this protein is 3-phosphoshikimate 1-carboxyvinyltransferase.